The following is a 508-amino-acid chain: UTP--glucose-1-phosphate uridylyltransferase (508 aa).

Position 13 is a phosphoserine (Ser13). UTP is bound by residues 113-116, Lys127, Gln190, and Gly222; that span reads LNGG. Residue 115 to 116 coordinates substrate; the sequence is GG. Lys127 contacts Mg(2+). Substrate contacts are provided by residues His223 and 251–253; that span reads NID. Residues Asp253 and Lys396 each coordinate UTP. A Mg(2+)-binding site is contributed by Asp253. Lys396 is an active-site residue. Phosphothreonine is present on Thr426. Ser434 bears the Phosphoserine mark. Residue Lys438 is modified to N6-acetyllysine. 2 positions are modified to phosphoserine: Ser448 and Ser461. The interval 457–508 is oligomerization; the sequence is HLTVSGDVTFGKNVSLKGTVIIIXNHGDRIDIPPGAVLENKIVSGNLRILDH. Residues 502-503 are critical for end-to-end subunit interaction; the sequence is NL.

It belongs to the UDPGP type 1 family. Homooctamer.

The protein localises to the cytoplasm. It carries out the reaction alpha-D-glucose 1-phosphate + UTP + H(+) = UDP-alpha-D-glucose + diphosphate. Its pathway is glycan biosynthesis; glycogen biosynthesis. Its function is as follows. UTP--glucose-1-phosphate uridylyltransferase catalyzing the conversion of glucose-1-phosphate into UDP-glucose, a crucial precursor for the production of glycogen. The sequence is that of UTP--glucose-1-phosphate uridylyltransferase (UGP2) from Sus scrofa (Pig).